Here is a 156-residue protein sequence, read N- to C-terminus: ATP synthase subunit b (156 aa).

A helical transmembrane segment spans residues 7 to 29 (LIGQSLTFIAFILFCMKYVWPQL).

Belongs to the ATPase B chain family. As to quaternary structure, F-type ATPases have 2 components, F(1) - the catalytic core - and F(0) - the membrane proton channel. F(1) has five subunits: alpha(3), beta(3), gamma(1), delta(1), epsilon(1). F(0) has three main subunits: a(1), b(2) and c(10-14). The alpha and beta chains form an alternating ring which encloses part of the gamma chain. F(1) is attached to F(0) by a central stalk formed by the gamma and epsilon chains, while a peripheral stalk is formed by the delta and b chains.

It localises to the cell inner membrane. In terms of biological role, f(1)F(0) ATP synthase produces ATP from ADP in the presence of a proton or sodium gradient. F-type ATPases consist of two structural domains, F(1) containing the extramembraneous catalytic core and F(0) containing the membrane proton channel, linked together by a central stalk and a peripheral stalk. During catalysis, ATP synthesis in the catalytic domain of F(1) is coupled via a rotary mechanism of the central stalk subunits to proton translocation. Its function is as follows. Component of the F(0) channel, it forms part of the peripheral stalk, linking F(1) to F(0). The chain is ATP synthase subunit b from Saccharophagus degradans (strain 2-40 / ATCC 43961 / DSM 17024).